The following is a 219-amino-acid chain: Beta-crystallin B2 (219 aa).

The residue at position 2 (Ala2) is an N-acetylalanine. The N-terminal arm stretch occupies residues 2–16 (ASEHQMPASKQQPAS). Beta/gamma crystallin 'Greek key' domains follow at residues 17 to 56 (PNIA…LVHS) and 57 to 101 (GPWV…RPIK). The tract at residues 102–120 (VVRAPRQPLPTRQTKDSQE) is connecting peptide. Beta/gamma crystallin 'Greek key' domains lie at 121-162 (HKIV…RVQS) and 163-205 (GTWV…RRIR). The C-terminal arm stretch occupies residues 207 to 219 (MQWHQRGAYHPSN).

Belongs to the beta/gamma-crystallin family. In terms of assembly, homo/heterodimer, or complexes of higher-order. The structure of beta-crystallin oligomers seems to be stabilized through interactions between the N-terminal arms.

Its function is as follows. Crystallins are the dominant structural components of the vertebrate eye lens. In Gallus gallus (Chicken), this protein is Beta-crystallin B2 (CRYBB2).